A 318-amino-acid chain; its full sequence is D-alanine--D-alanine ligase (318 aa).

The ATP-grasp domain occupies 116-315 (KQVWQSLGLP…FEQLSLAVLA (200 aa)). 146-201 (MSRLGDLVMVKPAQEGSSIGMAKVSNAQQLAAAIQQAFEYDDKVLLEQFIQGSEYT) lines the ATP pocket. Asp269, Glu282, and Asn284 together coordinate Mg(2+).

It belongs to the D-alanine--D-alanine ligase family. The cofactor is Mg(2+). Mn(2+) serves as cofactor.

It localises to the cytoplasm. The catalysed reaction is 2 D-alanine + ATP = D-alanyl-D-alanine + ADP + phosphate + H(+). Its pathway is cell wall biogenesis; peptidoglycan biosynthesis. Its function is as follows. Cell wall formation. The polypeptide is D-alanine--D-alanine ligase (Pseudoalteromonas atlantica (strain T6c / ATCC BAA-1087)).